The primary structure comprises 453 residues: Gastrin/cholecystokinin type B receptor (453 aa).

The Extracellular portion of the chain corresponds to 1-57; that stretch reads MELLKLNRSAQGSGAGPGASLCRAGGALLNSSGAGNLSCEPPRLRGAGTRELELAIR. 3 N-linked (GlcNAc...) asparagine glycosylation sites follow: N7, N30, and N36. A helical membrane pass occupies residues 58–79; that stretch reads VTLYAVIFLMSVGGNVLIIVVL. The Cytoplasmic portion of the chain corresponds to 80 to 87; sequence GLSRRLRT. The helical transmembrane segment at 88 to 109 threads the bilayer; the sequence is VTNAFLLSLAVSDLLLAVACMP. At 110–131 the chain is on the extracellular side; the sequence is FTLLPNLMGTFIFGTVVCKAVS. The cysteines at positions 127 and 206 are disulfide-linked. The chain crosses the membrane as a helical span at residues 132 to 150; sequence YLMGVSVSVSTLSLVAIAL. At 151–170 the chain is on the cytoplasmic side; that stretch reads ERYSAICRPLQARVWQTRSH. The helical transmembrane segment at 171–189 threads the bilayer; it reads AARVIIATWMLSGLLMVPY. The Extracellular segment spans residues 190–220; that stretch reads PVYTAVQPAGGARALQCVHRWPSARVRQTWS. The chain crosses the membrane as a helical span at residues 221 to 243; sequence VLLLLLLFFVPGVVMAVAYGLIS. Over 244 to 339 the chain is Cytoplasmic; it reads RELYLGLRFD…KLLAKKRVVR (96 aa). The segment at 258-286 is disordered; the sequence is SESRVRSQGGLRGGAGPGPAPPNGSCRPE. A helical transmembrane segment spans residues 340–361; it reads MLLVIVVLFFLCWLPLYSANTW. Residues 362 to 379 are Extracellular-facing; sequence RAFDSSGAHRALSGAPIS. The chain crosses the membrane as a helical span at residues 380-400; that stretch reads FIHLLSYASACVNPLVYCFMH. Topologically, residues 401-453 are cytoplasmic; that stretch reads RRFRQACLETCARCCPRPPRARPRPLPDEDPPTPSIASLSRLSYTTISTLGPG. C414 carries the S-palmitoyl cysteine lipid modification. The disordered stretch occupies residues 422–453; the sequence is RPRPLPDEDPPTPSIASLSRLSYTTISTLGPG. Residues 435-453 show a composition bias toward polar residues; that stretch reads SIASLSRLSYTTISTLGPG.

This sequence belongs to the G-protein coupled receptor 1 family. Parietal cells, pancreas, brain and various neoplastic tissues.

The protein resides in the cell membrane. In terms of biological role, receptor for gastrin and cholecystokinin. The CCK-B receptors occur throughout the central nervous system where they modulate anxiety, analgesia, arousal, and neuroleptic activity. This receptor mediates its action by association with G proteins that activate a phosphatidylinositol-calcium second messenger system. In Canis lupus familiaris (Dog), this protein is Gastrin/cholecystokinin type B receptor (CCKBR).